A 976-amino-acid chain; its full sequence is Metabotropic glutamate receptor (976 aa).

A signal peptide spans 1 to 25 (MKQKNNNGTILVVVMVLSWSRVVDL). Residues 26–626 (KSPSNTHTQD…IQYMKWNSLF (601 aa)) are Extracellular-facing. N-linked (GlcNAc...) asparagine glycans are attached at residues Asn-112 and Asn-143. Residues Ser-158 and 179–181 (AST) contribute to the L-glutamate site. The N-linked (GlcNAc...) asparagine glycan is linked to Asn-216. Position 229 (Tyr-229) interacts with L-glutamate. Residue Asn-299 is glycosylated (N-linked (GlcNAc...) asparagine). Residue Asp-310 participates in L-glutamate binding. An N-linked (GlcNAc...) asparagine glycan is attached at Asn-386. Position 417 (Lys-417) interacts with L-glutamate. N-linked (GlcNAc...) asparagine glycosylation is found at Asn-491 and Asn-524. Residues 627-649 (ALIPMAIAIFGIALTSIVIVLFA) form a helical membrane-spanning segment. The Cytoplasmic portion of the chain corresponds to 650-663 (KNHDTPLVRASGRE). Residues 664-684 (LSYTLLFGILVCYCNTFALIA) traverse the membrane as a helical segment. At 685–695 (KPTIGSCVLQR) the chain is on the extracellular side. Residues 696 to 714 (FGIGVGFSIIYSALLTKTN) form a helical membrane-spanning segment. At 715–738 (RISRIFHSASKSAQRLKYISPQSQ) the chain is on the cytoplasmic side. Residues 739 to 759 (VVITTSLIAIQVLITMIWMVV) traverse the membrane as a helical segment. Topologically, residues 760-782 (EPPGTRFYYPDRREVILKCKIQD) are extracellular. The helical transmembrane segment at 783–804 (MSFLFSQLYNMILITICTIYAI) threads the bilayer. Residues 805–817 (KTRKIPENFNESK) lie on the Cytoplasmic side of the membrane. A helical membrane pass occupies residues 818 to 840 (FIGFTMYTTCIIWLAFVPIYFGT). Over 841 to 850 (GNSYEVQTTT) the chain is Extracellular. A helical transmembrane segment spans residues 851–876 (LCISISLSASVALVCLYSPKVYILVF). Over 877 to 976 (HPDKNVRKLT…VEPICHIVNK (100 aa)) the chain is Cytoplasmic. The tract at residues 920-946 (LTGGAVGTNASSSTLPTQNSPHLDEAS) is disordered. The segment covering 927–946 (TNASSSTLPTQNSPHLDEAS) has biased composition (polar residues).

Belongs to the G-protein coupled receptor 3 family. Expressed in the neurons of the larval CNS from the beginning of the first until the third instar. Expression in the third-instar larval CNS is restricted to a discrete number of somas and projections in the brain lobes and in the ventral ganglion. In the ventral nerve cord, expression is detected both in somas and projections. Expressed in the antennal lobes, the optic lobes, the central complex and the median bundle in the adult CNS.

It localises to the cell membrane. Its function is as follows. G-protein coupled receptor for glutamate. Ligand binding causes a conformation change that triggers signaling via guanine nucleotide-binding proteins (G proteins) and modulates the activity of down-stream effectors. This is Metabotropic glutamate receptor (mGluR) from Drosophila melanogaster (Fruit fly).